The following is a 198-amino-acid chain: FMN-dependent NADH:quinone oxidoreductase 6 (198 aa).

FMN is bound at residue 96–99 (MYNF).

The protein belongs to the azoreductase type 1 family. In terms of assembly, homodimer. FMN serves as cofactor.

The enzyme catalyses 2 a quinone + NADH + H(+) = 2 a 1,4-benzosemiquinone + NAD(+). It catalyses the reaction N,N-dimethyl-1,4-phenylenediamine + anthranilate + 2 NAD(+) = 2-(4-dimethylaminophenyl)diazenylbenzoate + 2 NADH + 2 H(+). Quinone reductase that provides resistance to thiol-specific stress caused by electrophilic quinones. Its function is as follows. Also exhibits azoreductase activity. Catalyzes the reductive cleavage of the azo bond in aromatic azo compounds to the corresponding amines. This is FMN-dependent NADH:quinone oxidoreductase 6 from Burkholderia lata (strain ATCC 17760 / DSM 23089 / LMG 22485 / NCIMB 9086 / R18194 / 383).